A 111-amino-acid polypeptide reads, in one-letter code: Cytochrome c (111 aa).

A1 is modified (N-acetylalanine). Residues C22, C25, and H26 each contribute to the heme c site. K80 bears the N6,N6,N6-trimethyllysine mark. M88 is a binding site for heme c. K94 bears the N6,N6,N6-trimethyllysine mark.

It belongs to the cytochrome c family. In terms of processing, binds 1 heme c group covalently per subunit.

It localises to the mitochondrion intermembrane space. Functionally, electron carrier protein. The oxidized form of the cytochrome c heme group can accept an electron from the heme group of the cytochrome c1 subunit of cytochrome reductase. Cytochrome c then transfers this electron to the cytochrome oxidase complex, the final protein carrier in the mitochondrial electron-transport chain. The chain is Cytochrome c from Cucurbita maxima (Pumpkin).